The following is a 570-amino-acid chain: Phosphoenolpyruvate-protein phosphotransferase (570 aa).

His-189 functions as the Tele-phosphohistidine intermediate in the catalytic mechanism. Residues Arg-296 and Arg-332 each coordinate phosphoenolpyruvate. Glu-431 and Asp-455 together coordinate Mg(2+). Phosphoenolpyruvate contacts are provided by residues 454 to 455 (ND) and Arg-465. The active-site Proton donor is the Cys-502.

The protein belongs to the PEP-utilizing enzyme family. Homodimer. Interacts with FloT. Mg(2+) serves as cofactor.

It is found in the cytoplasm. It localises to the membrane raft. It catalyses the reaction L-histidyl-[protein] + phosphoenolpyruvate = N(pros)-phospho-L-histidyl-[protein] + pyruvate. Functionally, general (non sugar-specific) component of the phosphoenolpyruvate-dependent sugar phosphotransferase system (sugar PTS). This major carbohydrate active-transport system catalyzes the phosphorylation of incoming sugar substrates concomitantly with their translocation across the cell membrane. Enzyme I transfers the phosphoryl group from phosphoenolpyruvate (PEP) to the phosphoryl carrier protein (HPr). This Bacillus subtilis (strain 168) protein is Phosphoenolpyruvate-protein phosphotransferase (ptsI).